The primary structure comprises 105 residues: Large ribosomal subunit protein eL36 (105 aa).

The disordered stretch occupies residues 9–31; the sequence is VGLNKGHKVTKNVSKPRHSRRRR. The segment covering 13-31 has biased composition (basic residues); that stretch reads KGHKVTKNVSKPRHSRRRR. N6-acetyllysine is present on K62.

The protein belongs to the eukaryotic ribosomal protein eL36 family. In terms of assembly, component of the large ribosomal subunit.

Its subcellular location is the cytoplasm. The protein localises to the cytosol. In terms of biological role, component of the large ribosomal subunit. The ribosome is a large ribonucleoprotein complex responsible for the synthesis of proteins in the cell. This is Large ribosomal subunit protein eL36 (RPL36) from Oryctolagus cuniculus (Rabbit).